A 947-amino-acid chain; its full sequence is Probable outer membrane protein pmp19 (947 aa).

Residues 1–19 (MKQMRLWGFLFLSSFCQVS) form the signal peptide. Residues 672–947 (IPLQHLCVFG…NAHAGLSLSF (276 aa)) form the Autotransporter domain.

Belongs to the PMP outer membrane protein family.

Its subcellular location is the secreted. It is found in the cell wall. It localises to the cell outer membrane. The polypeptide is Probable outer membrane protein pmp19 (pmp19) (Chlamydia pneumoniae (Chlamydophila pneumoniae)).